The following is a 316-amino-acid chain: Protoheme IX farnesyltransferase (316 aa).

9 helical membrane-spanning segments follow: residues 28–48 (WLAL…AAGM), 57–77 (IPIG…AGAI), 106–126 (AALV…WLAT), 129–149 (LAAD…TMWL), 156–176 (NIVI…AATM), 179–199 (MAVL…PHFW), 230–250 (ILIY…VHEV), 254–274 (YTVV…RVLM), and 296–316 (YSLV…VLIG).

Belongs to the UbiA prenyltransferase family. Protoheme IX farnesyltransferase subfamily.

The protein resides in the cell inner membrane. The enzyme catalyses heme b + (2E,6E)-farnesyl diphosphate + H2O = Fe(II)-heme o + diphosphate. It participates in porphyrin-containing compound metabolism; heme O biosynthesis; heme O from protoheme: step 1/1. Functionally, converts heme B (protoheme IX) to heme O by substitution of the vinyl group on carbon 2 of heme B porphyrin ring with a hydroxyethyl farnesyl side group. The sequence is that of Protoheme IX farnesyltransferase from Gluconobacter oxydans (strain 621H) (Gluconobacter suboxydans).